The chain runs to 217 residues: MGQKVHPIGMRVGVIRDWDAKWYAEKEYSDYLHEDLAIRQLIQTKLADASVSLIETERAINKVIVTLHTAKPGMVIGKSGANVDALRAELNKLTGKQVHINIVEIKKPDLDAHLVGEGIAKQLEARIAFRRAQKQAIQRAMRAGAKGIKTQVSGRLNGADIARAEGYSEGTVPLHTLRADIDYAWEEADTTYGKLGVKVWIYRGEVLPTKKSVKGEK.

Residues 38 to 106 (IRQLIQTKLA…QVHINIVEIK (69 aa)) form the KH type-2 domain.

The protein belongs to the universal ribosomal protein uS3 family. As to quaternary structure, part of the 30S ribosomal subunit. Forms a tight complex with proteins S10 and S14.

Functionally, binds the lower part of the 30S subunit head. Binds mRNA in the 70S ribosome, positioning it for translation. The chain is Small ribosomal subunit protein uS3 from Lactococcus lactis subsp. lactis (strain IL1403) (Streptococcus lactis).